Here is a 2327-residue protein sequence, read N- to C-terminus: Nonribosomal peptide synthetase apmB (2327 aa).

Residues Asp214–Arg605 form an adenylation 1 region. A Carrier 1 domain is found at Glu734–Ile810. Ser771 carries the O-(pantetheine 4'-phosphoryl)serine modification. The condensation 1 stretch occupies residues Glu845 to Ser1259. The adenylation 2 stretch occupies residues Glu1281–Arg1675. One can recognise a Carrier 2 domain in the interval Pro1816–Ser1892. Ser1853 carries the O-(pantetheine 4'-phosphoryl)serine modification. The interval Thr1937 to Glu2260 is condensation 2. The disordered stretch occupies residues Arg2299–Arg2327.

It belongs to the NRP synthetase family.

The enzyme catalyses N-benzoyl-L-phenylalaninol + benzoate + L-phenylalanine + 2 ATP = asperphenamate + 2 AMP + 2 diphosphate + H(+). It participates in secondary metabolite biosynthesis. Nonribosomal peptide synthetase; part of the gene cluster that mediates the biosynthesis of asperphenamate, a rare linear amino acid ester that exhibits antitumor activity towards a number of cell lines. The structure of asperphenamate contains two subunits, N-benzoylphenylalanine and N-benzoylphenylalaninol, which are connected by an inter-molecular ester bond. The first step of asperphenamate biosynthesis is the generation of N-benzoylphenylalaninol by the nonribosomal peptide synthase apmA. Using phenylalanine and benzoic acid as substrates, apmA catalyzes amide bond formation and tethers the intermediate into the NRPS chain. Then, the terminal R domain of apmA catalyzes the reduction reaction to get the shunt product N-benzoylphenylalaninol. Subsequently, the nonribosomal peptide synthase apmB activates the same substrates as does apmA (phenylalanine and benzoic acid) to produce N-benzoylphenylalanine before condensing N-benzoylphenylalanine and N-benzoylphenylalaninol to release asperphenamate. The polypeptide is Nonribosomal peptide synthetase apmB (Penicillium brevicompactum).